Reading from the N-terminus, the 1380-residue chain is Protein TORNADO 1 (1380 aa).

10 LRR repeats span residues Phe26–Ile46, Thr47–Leu70, Thr105–Arg132, Asn161–Arg184, Asn266–Trp289, Glu299–Asn322, Lys323–Pro346, Ser348–Thr371, Ile446–Lys472, and Asn476–Ala502. A Roc domain is found at Pro493–Ile702. GTP-binding positions include Gly506–Thr513 and Asn567–Gln571. Residues Phe574–Leu594 form a helical membrane-spanning segment. LRR repeat units lie at residues Leu640 to Asp665, Val688 to Leu712, Leu799 to Lys826, Gln1023 to Asp1046, Glu1131 to Leu1154, and Gln1229 to Lys1254. Residue Thr641–Glu644 participates in GTP binding. The COR domain maps to Asn757 to Met931. The next 2 membrane-spanning stretches (helical) occupy residues Leu1255 to Pro1275 and Pro1287 to Gly1307.

As to expression, expressed in seedlings, roots, leaves, stems and flowers. Present in ovules, prominently in nucellus and integuments.

It localises to the membrane. In terms of biological role, involved in the basipetal transport of auxin (IAA) that modulates growth and organs organization. Required for initial divisions in the epidermal/lateral root cap leading to the formation of epidermal cells and a clone of lateral root cap cells, as well as for the maintenance of the radial pattern of cell specification in the root, thus regulating the distinction between the lateral root cap and epidermis. The sequence is that of Protein TORNADO 1 (TRN1) from Arabidopsis thaliana (Mouse-ear cress).